A 103-amino-acid chain; its full sequence is Phosphoribosyl-ATP pyrophosphatase (103 aa).

This sequence belongs to the PRA-PH family.

It is found in the cytoplasm. The enzyme catalyses 1-(5-phospho-beta-D-ribosyl)-ATP + H2O = 1-(5-phospho-beta-D-ribosyl)-5'-AMP + diphosphate + H(+). It functions in the pathway amino-acid biosynthesis; L-histidine biosynthesis; L-histidine from 5-phospho-alpha-D-ribose 1-diphosphate: step 2/9. In Rhodobacter capsulatus (strain ATCC BAA-309 / NBRC 16581 / SB1003), this protein is Phosphoribosyl-ATP pyrophosphatase (hisE).